A 66-amino-acid polypeptide reads, in one-letter code: Cold shock-like protein CspLB (66 aa).

Positions 4 to 63 (GTVKWFNSEKGFGFIEVEGGDDVFVHFSAIEGEGFKTLDEGQSVEFEIVEGQRGPQAEKV) constitute a CSD domain.

Homodimer.

It is found in the cytoplasm. The chain is Cold shock-like protein CspLB (cspLB) from Listeria monocytogenes serovar 1/2a (strain ATCC BAA-679 / EGD-e).